Reading from the N-terminus, the 548-residue chain is Chaperonin GroEL (548 aa).

Residues 30–33 (TLGP), Lys51, 87–91 (DGTTT), Gly415, 479–481 (NAA), and Asp495 contribute to the ATP site.

It belongs to the chaperonin (HSP60) family. In terms of assembly, forms a cylinder of 14 subunits composed of two heptameric rings stacked back-to-back. Interacts with the co-chaperonin GroES.

Its subcellular location is the cytoplasm. It catalyses the reaction ATP + H2O + a folded polypeptide = ADP + phosphate + an unfolded polypeptide.. Together with its co-chaperonin GroES, plays an essential role in assisting protein folding. The GroEL-GroES system forms a nano-cage that allows encapsulation of the non-native substrate proteins and provides a physical environment optimized to promote and accelerate protein folding. The chain is Chaperonin GroEL from Aliivibrio fischeri (strain MJ11) (Vibrio fischeri).